A 400-amino-acid chain; its full sequence is Putative F-box protein At1g30920 (400 aa).

Positions 4–49 constitute an F-box domain; sequence EENTDSIPIDLILDILSRLPSKSIARCRCVSKLWESMIRQSYFTEL.

The chain is Putative F-box protein At1g30920 from Arabidopsis thaliana (Mouse-ear cress).